The primary structure comprises 217 residues: Pyridoxine/pyridoxamine 5'-phosphate oxidase (217 aa).

Substrate contacts are provided by residues 13–16 (RREY) and lysine 71. FMN-binding positions include 66-71 (RIVLLK), 81-82 (YT), arginine 87, lysine 88, and glutamine 110. 3 residues coordinate substrate: tyrosine 128, arginine 132, and serine 136. FMN contacts are provided by residues 145–146 (QS) and tryptophan 190. A substrate-binding site is contributed by 196 to 198 (RLH). Arginine 200 contributes to the FMN binding site.

This sequence belongs to the pyridoxamine 5'-phosphate oxidase family. As to quaternary structure, homodimer. The cofactor is FMN.

It catalyses the reaction pyridoxamine 5'-phosphate + O2 + H2O = pyridoxal 5'-phosphate + H2O2 + NH4(+). It carries out the reaction pyridoxine 5'-phosphate + O2 = pyridoxal 5'-phosphate + H2O2. The protein operates within cofactor metabolism; pyridoxal 5'-phosphate salvage; pyridoxal 5'-phosphate from pyridoxamine 5'-phosphate: step 1/1. It participates in cofactor metabolism; pyridoxal 5'-phosphate salvage; pyridoxal 5'-phosphate from pyridoxine 5'-phosphate: step 1/1. In terms of biological role, catalyzes the oxidation of either pyridoxine 5'-phosphate (PNP) or pyridoxamine 5'-phosphate (PMP) into pyridoxal 5'-phosphate (PLP). The sequence is that of Pyridoxine/pyridoxamine 5'-phosphate oxidase from Yersinia enterocolitica serotype O:8 / biotype 1B (strain NCTC 13174 / 8081).